A 226-amino-acid chain; its full sequence is UPF0758 protein GTNG_2548 (226 aa).

Positions 104–226 constitute an MPN domain; it reads VIRCPEDGAK…FISLKEKGYV (123 aa). The Zn(2+) site is built by histidine 175, histidine 177, and aspartate 188. Positions 175-188 match the JAMM motif motif; that stretch reads HNHPSGDPTPSRED.

It belongs to the UPF0758 family.

The polypeptide is UPF0758 protein GTNG_2548 (Geobacillus thermodenitrificans (strain NG80-2)).